The primary structure comprises 165 residues: Peptide methionine sulfoxide reductase MsrA (165 aa).

C10 is a catalytic residue.

It belongs to the MsrA Met sulfoxide reductase family.

The catalysed reaction is L-methionyl-[protein] + [thioredoxin]-disulfide + H2O = L-methionyl-(S)-S-oxide-[protein] + [thioredoxin]-dithiol. It carries out the reaction [thioredoxin]-disulfide + L-methionine + H2O = L-methionine (S)-S-oxide + [thioredoxin]-dithiol. Functionally, has an important function as a repair enzyme for proteins that have been inactivated by oxidation. Catalyzes the reversible oxidation-reduction of methionine sulfoxide in proteins to methionine. This chain is Peptide methionine sulfoxide reductase MsrA, found in Campylobacter jejuni subsp. jejuni serotype O:23/36 (strain 81-176).